Here is a 992-residue protein sequence, read N- to C-terminus: Presequence protease, mitochondrial (992 aa).

A mitochondrion-targeting transit peptide spans 1–30 (MNYAKLSIAFSKKTIKTHNCRLFQRWLHVG). Histidine 91 is a binding site for Zn(2+). Glutamate 94 (proton acceptor) is an active-site residue. Zn(2+) is bound at residue histidine 95. Glutamate 167 is a catalytic residue. A Zn(2+)-binding site is contributed by glutamate 192.

It belongs to the peptidase M16 family. PreP subfamily. Monomer and homodimer; homodimerization is induced by binding of the substrate. Zn(2+) serves as cofactor.

The protein localises to the mitochondrion intermembrane space. It is found in the mitochondrion matrix. In terms of biological role, degrades mitochondrial transit peptides after their cleavage in the intermembrane space or in the matrix, and presequence peptides; clearance of these peptides is required to keep the presequence processing machinery running. Preferentially cleaves the N-terminal side of paired basic amino acid residues. Also degrades other unstructured peptides. May function as an ATP-dependent peptidase as opposed to a metalloendopeptidase. This chain is Presequence protease, mitochondrial (cym1), found in Schizosaccharomyces pombe (strain 972 / ATCC 24843) (Fission yeast).